Here is a 501-residue protein sequence, read N- to C-terminus: Cytoplasmic tRNA 2-thiolation protein 2 (501 aa).

Positions 1 to 12 are enriched in basic and acidic residues; it reads MCEMSEEYRESA. Disordered regions lie at residues 1–23 and 192–214; these read MCEM…RLGT and GVER…PTTA. At Cys-2 the chain carries N-acetylcysteine. Residue Ser-492 is modified to Phosphoserine.

This sequence belongs to the CTU2/NCS2 family. Component of a complex at least composed of URM1, CTU2/NCS2 and CTU1/ATPBD3.

Its subcellular location is the cytoplasm. Its pathway is tRNA modification; 5-methoxycarbonylmethyl-2-thiouridine-tRNA biosynthesis. Functionally, plays a central role in 2-thiolation of mcm(5)S(2)U at tRNA wobble positions of tRNA(Lys), tRNA(Glu) and tRNA(Gln). May act by forming a heterodimer with CTU1/ATPBD3 that ligates sulfur from thiocarboxylated URM1 onto the uridine of tRNAs at wobble position. The chain is Cytoplasmic tRNA 2-thiolation protein 2 from Bos taurus (Bovine).